Reading from the N-terminus, the 377-residue chain is Geranylgeranyl transferase type-1 subunit beta (377 aa).

4 PFTB repeats span residues 144 to 186 (KEAC…YMLN), 193 to 234 (MKKA…CLMG), 245 to 284 (LNRI…KLLK), and 291 to 333 (FEKN…SLME). Geranylgeranyl diphosphate contacts are provided by residues 219–221 (HGG) and 263–266 (RPNK). Positions 269 and 271 each coordinate Zn(2+). 272–275 (YSFW) is a binding site for geranylgeranyl diphosphate. Zn(2+) is bound at residue H321.

Belongs to the protein prenyltransferase subunit beta family. As to quaternary structure, heterodimer of FNTA and PGGT1B. PGGT1B mediates interaction with substrate peptides. Requires Zn(2+) as cofactor. Mg(2+) serves as cofactor.

It carries out the reaction geranylgeranyl diphosphate + L-cysteinyl-[protein] = S-geranylgeranyl-L-cysteinyl-[protein] + diphosphate. In terms of biological role, catalyzes the transfer of a geranyl-geranyl moiety from geranyl-geranyl pyrophosphate to a cysteine at the fourth position from the C-terminus of proteins having the C-terminal sequence Cys-aliphatic-aliphatic-X. Known substrates include RAC1, RAC2, RAP1A and RAP1B. This chain is Geranylgeranyl transferase type-1 subunit beta (PGGT1B), found in Bos taurus (Bovine).